A 417-amino-acid chain; its full sequence is NADH-quinone oxidoreductase subunit D (417 aa).

Belongs to the complex I 49 kDa subunit family. As to quaternary structure, NDH-1 is composed of 14 different subunits. Subunits NuoB, C, D, E, F, and G constitute the peripheral sector of the complex.

The protein resides in the cell inner membrane. It carries out the reaction a quinone + NADH + 5 H(+)(in) = a quinol + NAD(+) + 4 H(+)(out). In terms of biological role, NDH-1 shuttles electrons from NADH, via FMN and iron-sulfur (Fe-S) centers, to quinones in the respiratory chain. The immediate electron acceptor for the enzyme in this species is believed to be ubiquinone. Couples the redox reaction to proton translocation (for every two electrons transferred, four hydrogen ions are translocated across the cytoplasmic membrane), and thus conserves the redox energy in a proton gradient. The sequence is that of NADH-quinone oxidoreductase subunit D from Legionella pneumophila (strain Corby).